The chain runs to 329 residues: Malate dehydrogenase (329 aa).

NAD(+) is bound at residue 12–18; that stretch reads GAAGQIG. Substrate-binding residues include R93 and R99. NAD(+) contacts are provided by residues N106, Q113, and 130 to 132; that span reads VGN. The substrate site is built by N132 and R163. The active-site Proton acceptor is the H188.

Belongs to the LDH/MDH superfamily. MDH type 2 family.

It carries out the reaction (S)-malate + NAD(+) = oxaloacetate + NADH + H(+). In terms of biological role, catalyzes the reversible oxidation of malate to oxaloacetate. The polypeptide is Malate dehydrogenase (Streptomyces griseus subsp. griseus (strain JCM 4626 / CBS 651.72 / NBRC 13350 / KCC S-0626 / ISP 5235)).